The sequence spans 217 residues: MPPVCGRRCSRTGEVRRYPGSFVRKWKRVETANGPRFRSVVAPHEVALLKHLVGALLGLLNERESSSPLDELEVITGIKAGNAQRPEDPTLRRLLPDFYTPDDKDQLDPAALDAVDSLNAALRSLHEPEIVDAKRSAAQQLLDTLPESDGRLELTEASANAWIAAVNDLRLALGVILEIDRPAPERVPAGHPLSVHFDVYQWLTVLQEYLVLALMAT.

The short motif at 5–9 is the CXXXC element; that stretch reads CGRRC. Cysteine 5 and cysteine 9 form a disulfide bridge.

Belongs to the AosR family.

The sequence is that of Putative oxidative stress regulator AosR from Mycobacterium leprae (strain TN).